Consider the following 126-residue polypeptide: Glycine cleavage system H protein (126 aa).

Residues Thr-22 to Lys-104 enclose the Lipoyl-binding domain. Lys-63 is modified (N6-lipoyllysine).

The protein belongs to the GcvH family. The glycine cleavage system is composed of four proteins: P, T, L and H. The cofactor is (R)-lipoate.

Functionally, the glycine cleavage system catalyzes the degradation of glycine. The H protein shuttles the methylamine group of glycine from the P protein to the T protein. Its function is as follows. Is also involved in protein lipoylation via its role as an octanoyl/lipoyl carrier protein intermediate. In Staphylococcus carnosus (strain TM300), this protein is Glycine cleavage system H protein.